The chain runs to 301 residues: Mating type protein mtA-1 (301 aa).

Positions 49-104 (APKKKVNGFMGFRSYYSSLFSQFPQKARSPFMTILWQHDPFHNEWDFMCSVYSSIR) form a DNA-binding region, alpha box.

This sequence belongs to the MATALPHA1 family.

It localises to the nucleus. In terms of biological role, mating type proteins are sequence specific DNA-binding proteins that act as master switches in fungal differentiation by controlling gene expression in a cell type-specific fashion. Transcriptional activator that induces the transcription of alpha-specific genes. The chain is Mating type protein mtA-1 (MTA1) from Sordaria fimicola.